Here is a 146-residue protein sequence, read N- to C-terminus: Transcriptional regulator MraZ (146 aa).

SpoVT-AbrB domains follow at residues 6-49 and 78-121; these read TYDH…TEEE and THEV…DQKS.

It belongs to the MraZ family. As to quaternary structure, forms oligomers.

The protein localises to the cytoplasm. It is found in the nucleoid. The sequence is that of Transcriptional regulator MraZ from Mesoplasma florum (strain ATCC 33453 / NBRC 100688 / NCTC 11704 / L1) (Acholeplasma florum).